A 301-amino-acid chain; its full sequence is Asialoglycoprotein receptor 2 (301 aa).

Positions 1–29 (MEKDFQDIQQLDSEENDHQLIGDEEQGSH) are disordered. The Cytoplasmic segment spans residues 1–58 (MEKDFQDIQQLDSEENDHQLIGDEEQGSHVQNLRTENPRWGGQPPSRPFPQRLCSKFR). S13 bears the Phosphoserine mark. C54 carries the S-palmitoyl cysteine lipid modification. Residues 59-79 (LSLLALAFNILLLVVICVVSS) form a helical; Signal-anchor for type II membrane protein membrane-spanning segment. Topologically, residues 80–301 (QSMQLQKEFW…ACERKRDITY (222 aa)) are extracellular. N-linked (GlcNAc...) asparagine glycosylation is found at N97, N119, and N165. Positions 169 to 295 (CCPVNWVEFG…QQVNRWACER (127 aa)) constitute a C-type lectin domain. 3 cysteine pairs are disulfide-bonded: C170/C181, C198/C293, and C271/C285.

In terms of assembly, interacts with LASS2. In terms of tissue distribution, expressed exclusively in hepatic parenchymal cells.

It localises to the membrane. In terms of biological role, mediates the endocytosis of plasma glycoproteins to which the terminal sialic acid residue on their complex carbohydrate moieties has been removed. The receptor recognizes terminal galactose and N-acetylgalactosamine units. After ligand binding to the receptor, the resulting complex is internalized and transported to a sorting organelle, where receptor and ligand are disassociated. The receptor then returns to the cell membrane surface. The chain is Asialoglycoprotein receptor 2 (Asgr2) from Rattus norvegicus (Rat).